The chain runs to 29 residues: Ranatuerin-2SEa (29 aa).

An intrachain disulfide couples Cys23 to Cys29.

In terms of tissue distribution, expressed by the skin glands.

It is found in the secreted. In terms of biological role, mast cell degranulating peptide. Causes histamine release from rat peritoneal mast cells in vitro. Has antibacterial activity against the Gram-negative bacterium E.coli K12 and Gram-positive bacterium M.luteus NCT C2665. This Lithobates sevosus (Dusky gopher frog) protein is Ranatuerin-2SEa.